We begin with the raw amino-acid sequence, 280 residues long: Elongation factor Ts (280 aa).

The segment at 79 to 82 is involved in Mg(2+) ion dislocation from EF-Tu; sequence TDFV.

Belongs to the EF-Ts family.

It is found in the cytoplasm. Its function is as follows. Associates with the EF-Tu.GDP complex and induces the exchange of GDP to GTP. It remains bound to the aminoacyl-tRNA.EF-Tu.GTP complex up to the GTP hydrolysis stage on the ribosome. This chain is Elongation factor Ts, found in Vibrio vulnificus (strain CMCP6).